We begin with the raw amino-acid sequence, 201 residues long: Probable nicotinate-nucleotide adenylyltransferase (201 aa).

The protein belongs to the NadD family.

It catalyses the reaction nicotinate beta-D-ribonucleotide + ATP + H(+) = deamido-NAD(+) + diphosphate. It functions in the pathway cofactor biosynthesis; NAD(+) biosynthesis; deamido-NAD(+) from nicotinate D-ribonucleotide: step 1/1. Catalyzes the reversible adenylation of nicotinate mononucleotide (NaMN) to nicotinic acid adenine dinucleotide (NaAD). The sequence is that of Probable nicotinate-nucleotide adenylyltransferase from Neisseria gonorrhoeae (strain ATCC 700825 / FA 1090).